A 234-amino-acid polypeptide reads, in one-letter code: Immune-associated nucleotide-binding protein 2 (234 aa).

The region spanning 21-223 is the AIG1-type G domain; sequence KPVKNIVLVG…YTEDMYRNIK (203 aa). Residues 30–38, S51, and N183 contribute to the GTP site; that span reads GRSVNGICT.

It belongs to the TRAFAC class TrmE-Era-EngA-EngB-Septin-like GTPase superfamily. AIG1/Toc34/Toc159-like paraseptin GTPase family. IAN subfamily. As to expression, mostly expressed in pollen. Also detected in lateral roots and radicles.

In Arabidopsis thaliana (Mouse-ear cress), this protein is Immune-associated nucleotide-binding protein 2.